The primary structure comprises 201 residues: Putative amino-acid transporter Mb0498 (201 aa).

The next 5 helical transmembrane spans lie at 25–45 (VLVI…AGVG), 57–77 (MTLV…LLAA), 104–124 (LVVT…IGAL), 133–153 (WFFG…LGFS), and 169–189 (ILDA…LVTS).

The protein belongs to the LysE/ArgO transporter (TC 2.A.75) family.

It is found in the cell membrane. In Mycobacterium bovis (strain ATCC BAA-935 / AF2122/97), this protein is Putative amino-acid transporter Mb0498.